The following is a 755-amino-acid chain: Serine/threonine-protein kinase GL21140 (755 aa).

Residues 18 to 52 (QASASGSGTPKKTAASSAAAQNSKQLLDQLSQQQK) show a composition bias toward low complexity. Residues 18-128 (QASASGSGTP…GSANTNGSAS (111 aa)) are disordered. Composition is skewed to basic and acidic residues over residues 53-66 (AQEE…RDCD) and 74-84 (EPEKDLDELRD). A compositionally biased stretch (polar residues) spans 87–99 (GSLTGSGSVGKSN). The span at 100–128 (GSLSGASSTTSAPAGTSTPGSANTNGSAS) shows a compositional bias: low complexity. Doublecortin domains are found at residues 157 to 243 (HRIK…VDYN) and 314 to 397 (RIVT…VDDF). Residues 484–742 (YTLSQIIGDG…SEDILDHYWT (259 aa)) enclose the Protein kinase domain. Residues 490–498 (IGDGNFAIV) and Lys-513 contribute to the ATP site. The active-site Proton acceptor is the Asp-605.

The protein belongs to the protein kinase superfamily. CAMK Ser/Thr protein kinase family. CaMK subfamily.

It carries out the reaction L-seryl-[protein] + ATP = O-phospho-L-seryl-[protein] + ADP + H(+). The catalysed reaction is L-threonyl-[protein] + ATP = O-phospho-L-threonyl-[protein] + ADP + H(+). The protein is Serine/threonine-protein kinase GL21140 of Drosophila persimilis (Fruit fly).